The sequence spans 86 residues: Cell division topological specificity factor (86 aa).

The protein belongs to the MinE family.

Prevents the cell division inhibition by proteins MinC and MinD at internal division sites while permitting inhibition at polar sites. This ensures cell division at the proper site by restricting the formation of a division septum at the midpoint of the long axis of the cell. This is Cell division topological specificity factor from Rhizobium johnstonii (strain DSM 114642 / LMG 32736 / 3841) (Rhizobium leguminosarum bv. viciae).